The primary structure comprises 191 residues: Large ribosomal subunit protein bL9 (191 aa).

Residues 149-191 are disordered; the sequence is EEAERQSKGESLTSADAIYGVDEDALRPEDFFDPEADGNEDDE. The segment covering 179 to 191 has biased composition (acidic residues); it reads FFDPEADGNEDDE.

This sequence belongs to the bacterial ribosomal protein bL9 family.

Its function is as follows. Binds to the 23S rRNA. This chain is Large ribosomal subunit protein bL9 (rplI), found in Agrobacterium fabrum (strain C58 / ATCC 33970) (Agrobacterium tumefaciens (strain C58)).